A 375-amino-acid polypeptide reads, in one-letter code: Queuine tRNA-ribosyltransferase (375 aa).

The active-site Proton acceptor is D90. Substrate-binding positions include 90–94 (DSGGF), D144, Q190, and G217. Positions 248–254 (GIGTPHY) are RNA binding. D267 (nucleophile) is an active-site residue. Residues 272–276 (TRIAR) form an RNA binding; important for wobble base 34 recognition region. 4 residues coordinate Zn(2+): C305, C307, C310, and H336.

This sequence belongs to the queuine tRNA-ribosyltransferase family. As to quaternary structure, homodimer. Within each dimer, one monomer is responsible for RNA recognition and catalysis, while the other monomer binds to the replacement base PreQ1. The cofactor is Zn(2+).

The enzyme catalyses 7-aminomethyl-7-carbaguanine + guanosine(34) in tRNA = 7-aminomethyl-7-carbaguanosine(34) in tRNA + guanine. Its pathway is tRNA modification; tRNA-queuosine biosynthesis. Functionally, catalyzes the base-exchange of a guanine (G) residue with the queuine precursor 7-aminomethyl-7-deazaguanine (PreQ1) at position 34 (anticodon wobble position) in tRNAs with GU(N) anticodons (tRNA-Asp, -Asn, -His and -Tyr). Catalysis occurs through a double-displacement mechanism. The nucleophile active site attacks the C1' of nucleotide 34 to detach the guanine base from the RNA, forming a covalent enzyme-RNA intermediate. The proton acceptor active site deprotonates the incoming PreQ1, allowing a nucleophilic attack on the C1' of the ribose to form the product. After dissociation, two additional enzymatic reactions on the tRNA convert PreQ1 to queuine (Q), resulting in the hypermodified nucleoside queuosine (7-(((4,5-cis-dihydroxy-2-cyclopenten-1-yl)amino)methyl)-7-deazaguanosine). The protein is Queuine tRNA-ribosyltransferase of Borrelia duttonii (strain Ly).